Consider the following 89-residue polypeptide: Small ribosomal subunit protein uS15 (89 aa).

It belongs to the universal ribosomal protein uS15 family. Part of the 30S ribosomal subunit. Forms a bridge to the 50S subunit in the 70S ribosome, contacting the 23S rRNA.

One of the primary rRNA binding proteins, it binds directly to 16S rRNA where it helps nucleate assembly of the platform of the 30S subunit by binding and bridging several RNA helices of the 16S rRNA. Its function is as follows. Forms an intersubunit bridge (bridge B4) with the 23S rRNA of the 50S subunit in the ribosome. The polypeptide is Small ribosomal subunit protein uS15 (Mycolicibacterium smegmatis (strain ATCC 700084 / mc(2)155) (Mycobacterium smegmatis)).